The primary structure comprises 105 residues: MARRLWILSLLAVTLTVALAAPSQKSKRSVTVEQPSTSTNSDGNTTPSKNVTLSQGGSTTDGDEDYSGGDYDVLITDTDGGNHQQPQEKTDEHKGEHTKENEKTQ.

A signal peptide spans 1-20 (MARRLWILSLLAVTLTVALA). Positions 21–105 (APSQKSKRSV…EHTKENEKTQ (85 aa)) are disordered. Over residues 29–55 (SVTVEQPSTSTNSDGNTTPSKNVTLSQ) the composition is skewed to polar residues. N50 carries N-linked (GlcNAc...) asparagine; by host glycosylation. Residues 86 to 105 (PQEKTDEHKGEHTKENEKTQ) show a composition bias toward basic and acidic residues.

The protein belongs to the HHV-5 UL22A protein family.

The protein localises to the virion. This Homo sapiens (Human) protein is Glycoprotein UL22A (UL22A).